Reading from the N-terminus, the 379-residue chain is Succinyl-diaminopimelate desuccinylase (379 aa).

Residue His68 coordinates Zn(2+). Asp70 is a catalytic residue. A Zn(2+)-binding site is contributed by Asp101. Glu135 functions as the Proton acceptor in the catalytic mechanism. The Zn(2+) site is built by Glu136, Glu164, and His350.

The protein belongs to the peptidase M20A family. DapE subfamily. As to quaternary structure, homodimer. It depends on Zn(2+) as a cofactor. Requires Co(2+) as cofactor.

It catalyses the reaction N-succinyl-(2S,6S)-2,6-diaminopimelate + H2O = (2S,6S)-2,6-diaminopimelate + succinate. It participates in amino-acid biosynthesis; L-lysine biosynthesis via DAP pathway; LL-2,6-diaminopimelate from (S)-tetrahydrodipicolinate (succinylase route): step 3/3. In terms of biological role, catalyzes the hydrolysis of N-succinyl-L,L-diaminopimelic acid (SDAP), forming succinate and LL-2,6-diaminopimelate (DAP), an intermediate involved in the bacterial biosynthesis of lysine and meso-diaminopimelic acid, an essential component of bacterial cell walls. This is Succinyl-diaminopimelate desuccinylase from Bordetella parapertussis (strain 12822 / ATCC BAA-587 / NCTC 13253).